We begin with the raw amino-acid sequence, 201 residues long: ATP-dependent Clp protease proteolytic subunit (201 aa).

The active-site Nucleophile is S98. Residue H123 is part of the active site.

Belongs to the peptidase S14 family. Fourteen ClpP subunits assemble into 2 heptameric rings which stack back to back to give a disk-like structure with a central cavity, resembling the structure of eukaryotic proteasomes.

It localises to the cytoplasm. The catalysed reaction is Hydrolysis of proteins to small peptides in the presence of ATP and magnesium. alpha-casein is the usual test substrate. In the absence of ATP, only oligopeptides shorter than five residues are hydrolyzed (such as succinyl-Leu-Tyr-|-NHMec, and Leu-Tyr-Leu-|-Tyr-Trp, in which cleavage of the -Tyr-|-Leu- and -Tyr-|-Trp bonds also occurs).. Its function is as follows. Cleaves peptides in various proteins in a process that requires ATP hydrolysis. Has a chymotrypsin-like activity. Plays a major role in the degradation of misfolded proteins. The protein is ATP-dependent Clp protease proteolytic subunit of Rickettsia peacockii (strain Rustic).